The primary structure comprises 102 residues: Small ribosomal subunit protein uS10 (102 aa).

Belongs to the universal ribosomal protein uS10 family. Part of the 30S ribosomal subunit.

In terms of biological role, involved in the binding of tRNA to the ribosomes. The polypeptide is Small ribosomal subunit protein uS10 (Geotalea daltonii (strain DSM 22248 / JCM 15807 / FRC-32) (Geobacter daltonii)).